The chain runs to 418 residues: Light-independent protochlorophyllide reductase subunit N (418 aa).

[4Fe-4S] cluster contacts are provided by cysteine 17, cysteine 42, and cysteine 103.

It belongs to the BchN/ChlN family. In terms of assembly, protochlorophyllide reductase is composed of three subunits; ChlL, ChlN and ChlB. Forms a heterotetramer of two ChlB and two ChlN subunits. [4Fe-4S] cluster serves as cofactor.

The catalysed reaction is chlorophyllide a + oxidized 2[4Fe-4S]-[ferredoxin] + 2 ADP + 2 phosphate = protochlorophyllide a + reduced 2[4Fe-4S]-[ferredoxin] + 2 ATP + 2 H2O. The protein operates within porphyrin-containing compound metabolism; chlorophyll biosynthesis (light-independent). Component of the dark-operative protochlorophyllide reductase (DPOR) that uses Mg-ATP and reduced ferredoxin to reduce ring D of protochlorophyllide (Pchlide) to form chlorophyllide a (Chlide). This reaction is light-independent. The NB-protein (ChlN-ChlB) is the catalytic component of the complex. The chain is Light-independent protochlorophyllide reductase subunit N from Prochlorococcus marinus (strain MIT 9303).